The chain runs to 238 residues: Orotidine 5'-phosphate decarboxylase (238 aa).

Residues aspartate 10, lysine 32, 59–68 (DLKLHDIPNT), threonine 122, arginine 184, glutamine 193, glycine 213, and arginine 214 contribute to the substrate site. The active-site Proton donor is the lysine 61.

The protein belongs to the OMP decarboxylase family. Type 1 subfamily. As to quaternary structure, homodimer.

It catalyses the reaction orotidine 5'-phosphate + H(+) = UMP + CO2. The protein operates within pyrimidine metabolism; UMP biosynthesis via de novo pathway; UMP from orotate: step 2/2. Its function is as follows. Catalyzes the decarboxylation of orotidine 5'-monophosphate (OMP) to uridine 5'-monophosphate (UMP). The sequence is that of Orotidine 5'-phosphate decarboxylase from Bacillus anthracis (strain A0248).